The primary structure comprises 72 residues: Translation initiation factor IF-1 (72 aa).

An S1-like domain is found at 1-72; the sequence is MPKEEVLEFP…TKGRITYRFK (72 aa).

It belongs to the IF-1 family. As to quaternary structure, component of the 30S ribosomal translation pre-initiation complex which assembles on the 30S ribosome in the order IF-2 and IF-3, IF-1 and N-formylmethionyl-tRNA(fMet); mRNA recruitment can occur at any time during PIC assembly.

It is found in the cytoplasm. In terms of biological role, one of the essential components for the initiation of protein synthesis. Stabilizes the binding of IF-2 and IF-3 on the 30S subunit to which N-formylmethionyl-tRNA(fMet) subsequently binds. Helps modulate mRNA selection, yielding the 30S pre-initiation complex (PIC). Upon addition of the 50S ribosomal subunit IF-1, IF-2 and IF-3 are released leaving the mature 70S translation initiation complex. This is Translation initiation factor IF-1 from Rhizobium etli (strain ATCC 51251 / DSM 11541 / JCM 21823 / NBRC 15573 / CFN 42).